A 181-amino-acid chain; its full sequence is ATP synthase subunit b (181 aa).

Residues 24 to 44 form a helical membrane-spanning segment; sequence LFPNLPNFIAHLLATIILVIV.

Belongs to the ATPase B chain family. F-type ATPases have 2 components, F(1) - the catalytic core - and F(0) - the membrane proton channel. F(1) has five subunits: alpha(3), beta(3), gamma(1), delta(1), epsilon(1). F(0) has three main subunits: a(1), b(2) and c(10-14). The alpha and beta chains form an alternating ring which encloses part of the gamma chain. F(1) is attached to F(0) by a central stalk formed by the gamma and epsilon chains, while a peripheral stalk is formed by the delta and b chains.

The protein resides in the cell membrane. In terms of biological role, f(1)F(0) ATP synthase produces ATP from ADP in the presence of a proton or sodium gradient. F-type ATPases consist of two structural domains, F(1) containing the extramembraneous catalytic core and F(0) containing the membrane proton channel, linked together by a central stalk and a peripheral stalk. During catalysis, ATP synthesis in the catalytic domain of F(1) is coupled via a rotary mechanism of the central stalk subunits to proton translocation. Its function is as follows. Component of the F(0) channel, it forms part of the peripheral stalk, linking F(1) to F(0). This is ATP synthase subunit b from Mycoplasma mycoides subsp. mycoides SC (strain CCUG 32753 / NCTC 10114 / PG1).